The chain runs to 125 residues: Large ribosomal subunit protein bL19 (125 aa).

It belongs to the bacterial ribosomal protein bL19 family.

In terms of biological role, this protein is located at the 30S-50S ribosomal subunit interface and may play a role in the structure and function of the aminoacyl-tRNA binding site. The sequence is that of Large ribosomal subunit protein bL19 from Ehrlichia canis (strain Jake).